The primary structure comprises 364 residues: Nucleoporin SEH1 (364 aa).

WD repeat units follow at residues 10–49 (DHKD…EWNC), 55–96 (THSG…SNDK), 111–152 (DSRT…NLSQ), 160–210 (SCKL…RKYA), 217–258 (TVTD…KESS), and 275–314 (GHNS…NWKC). The interval 326–364 (NGAAGQAGTPGAAGTPGGPASQNALQAVAGRKKAQLMPG) is disordered. The segment covering 327–338 (GAAGQAGTPGAA) has biased composition (low complexity). A compositionally biased stretch (basic residues) spans 355–364 (GRKKAQLMPG).

This sequence belongs to the WD repeat SEC13 family. In terms of assembly, component of the Nup107-160 subcomplex of the nuclear pore complex (NPC). The Nup107-160 subcomplex includes NUP160, NUP133, NUP107, NUP98, NUP85, NUP43, NUP37, SEH1 and SEC13. Component of the GATOR2 subcomplex, composed of MIOS, SEC13, SEH1L, WDR24 and WDR59. The GATOR2 complex interacts with CASTOR1 and CASTOR2; the interaction is negatively regulated by arginine. The GATOR2 complex interacts with SESN1, SESN2 and SESN3; the interaction is negatively regulated by amino acids.

The protein resides in the chromosome. Its subcellular location is the centromere. It localises to the kinetochore. It is found in the nucleus. The protein localises to the nuclear pore complex. The protein resides in the lysosome membrane. With respect to regulation, the GATOR2 complex is negatively regulated by the upstream amino acid sensors CASTOR1 and SESN2, which sequester the GATOR2 complex in absence of amino acids. In the presence of abundant amino acids, GATOR2 is released from CASTOR1 and SESN2 and activated. In terms of biological role, component of the Nup107-160 subcomplex of the nuclear pore complex (NPC). The Nup107-160 subcomplex is required for the assembly of a functional NPC. The Nup107-160 subcomplex is also required for normal kinetochore microtubule attachment, mitotic progression and chromosome segregation. This subunit plays a role in recruitment of the Nup107-160 subcomplex to the kinetochore. Its function is as follows. As a component of the GATOR2 complex, functions as an activator of the amino acid-sensing branch of the mTORC1 signaling pathway. The GATOR2 complex indirectly activates mTORC1 through the inhibition of the GATOR1 subcomplex. GATOR2 probably acts as an E3 ubiquitin-protein ligase toward GATOR1. In the presence of abundant amino acids, the GATOR2 complex mediates ubiquitination of the NPRL2 core component of the GATOR1 complex, leading to GATOR1 inactivation. In the absence of amino acids, GATOR2 is inhibited, activating the GATOR1 complex. This is Nucleoporin SEH1 (seh1l) from Osmerus mordax (Rainbow smelt).